Here is a 205-residue protein sequence, read N- to C-terminus: Beta-crystallin B2 (205 aa).

The residue at position 2 (Ala-2) is an N-acetylalanine. Residues 2–16 are N-terminal arm; it reads ASDHQSPATKQQQPS. Beta/gamma crystallin 'Greek key' domains follow at residues 17-56 and 57-101; these read SKIV…LVHS and GPWV…RPIK. A connecting peptide region spans residues 102-106; it reads VDSQE. Beta/gamma crystallin 'Greek key' domains lie at 107–148 and 149–191; these read HKIV…RVQS and GTWV…RRIR. A C-terminal arm region spans residues 193-205; that stretch reads MQWHQRGTFHPTN.

Belongs to the beta/gamma-crystallin family. As to quaternary structure, homo/heterodimer, or complexes of higher-order. The structure of beta-crystallin oligomers seems to be stabilized through interactions between the N-terminal arms. The N-terminus is blocked.

Functionally, crystallins are the dominant structural components of the vertebrate eye lens. In Aquarana catesbeiana (American bullfrog), this protein is Beta-crystallin B2.